A 252-amino-acid chain; its full sequence is tRNA pseudouridine synthase A (252 aa).

D52 (nucleophile) is an active-site residue. Y110 is a substrate binding site.

Belongs to the tRNA pseudouridine synthase TruA family. As to quaternary structure, homodimer.

It catalyses the reaction uridine(38/39/40) in tRNA = pseudouridine(38/39/40) in tRNA. Functionally, formation of pseudouridine at positions 38, 39 and 40 in the anticodon stem and loop of transfer RNAs. This chain is tRNA pseudouridine synthase A, found in Blochmanniella floridana.